Consider the following 501-residue polypeptide: TNF receptor-associated factor 2 (501 aa).

Alanine 2 carries the post-translational modification N-acetylalanine. The residue at position 5 (serine 5) is a Phosphoserine. Threonine 7 is modified (phosphothreonine). The residue at position 11 (serine 11) is a Phosphoserine. Residue threonine 22 is modified to Phosphothreonine. Lysine 31 is covalently cross-linked (Glycyl lysine isopeptide (Lys-Gly) (interchain with G-Cter in ubiquitin)). The RING-type zinc-finger motif lies at cysteine 34 to valine 73. The residue at position 117 (threonine 117) is a Phosphothreonine; by PKC. 2 consecutive TRAF-type zinc fingers follow at residues cysteine 124–glutamate 180 and alanine 177–glutamine 233. The interval glutamate 283 to valine 293 is important for interaction with BIRC2 and BIRC3. The stretch at threonine 299–serine 348 forms a coiled coil. A Glycyl lysine isopeptide (Lys-Gly) (interchain with G-Cter in ubiquitin) cross-link involves residue lysine 320. In terms of domain architecture, MATH spans aspartate 351–valine 496.

It belongs to the TNF receptor-associated factor family. A subfamily. As to quaternary structure, homotrimer. Heterotrimer with TRAF1. Heterotrimer with TRAF3 (via TRAF domain). The domain containing the RING-type and the first TRAF-type zinc finger can also form homodimers (in vitro). Interacts with TNFRSF1B/TNFR2. Interacts with TNFRSF5/CD40. Interacts with TNFRSF4, TNFRSF7/CD27, TNFRSF8/CD30, TNFRSF9/CD137, TNFRSF11A/RANK, TNFRSF13B/TACI, TNFRSF14, TNFRSF16/NGFR, TNFRSF17/BCMA, TNFRSF18/AITR, TNFRSF19/TROY, TNFRSF19L/RELT and EDAR. Stimulation of TNF-alpha receptor TNFRSF1A leads to the formation of two distinct signaling complexes. Plasma membrane-bound complex I is composed of TNFRSF1A, TRADD, RIPK1, TRAF2 and BIRC2/c-IAP1 or BIRC3 which interacts with CHUCK/IKK-alpha, IKBKB/IKK-beta and IKBKG/IKK-gamma promoting cell survival. Subsequently, TRADD, RIPK1 and TRAF2 dissociate from TNFRSF1A and form cytoplasmic complex II with FADD and caspase CASP8 promoting cell apoptosis. Interacts with TRADD. Identified in a complex with TNFRSF1A, RIPK1 and IKBKB/IKK-beta. Interacts with RIPK2. Interacts with BIRC2 and BIRC3 N-terminus; a single BIRC2 or BIRC3 molecule interacts with a heterotrimer formed by TRAF1 and TRAF2, or a TRAF2 homotrimer. Identified in a complex composed of TRAF2, TRAF3, BIRC2 and BIRC3. Interacts with BIRC2; the interaction promotes BIRC2 stability. Interaction with BIRC2 and/or BIRC3 is essential for ubiquitination of IKBKE, degradation of NFKBIA and activation of NF-kappa-B. Within complex I, phosphorylated TRAF2 interacts (via 'Lys-63'-linked polyubiquitin chains) with CHUCK/IKK-alpha, IKBKB/IKK-beta, IKBKG/IKK-gamma TAB2, TAB3 and TAK1 in response to TNF-alpha stimulation. Within complex I, interacts with UXT isoform 1 (via TPQE motif); the interaction prevents the recruitment of FADD and CASP8/caspase 8 to complex I. Forms a complex composed of TNFRSF8/CD30 or TNFRSF1B/TNFR2, and TRAF1, TRAF2 and E3 ligase TRAIP. Within the complex, interacts with TRAIP; the interaction inhibits TRAF2-mediated NF-kappa B activation. Component of a complex composed of TANK and TBK1. Interacts with TRPC4AP. Interacts with MAP3K1/MEKK1, MAP3K5/ASK1 and MAP3K11/MLK3 in response to TNF-alpha stimulation; the interaction leads to JNK activation and interaction with MAP3K5 is inhibited by PRMT1. Component of a complex composed of MAP3K14/NIK BIRC3 and TRAF3; the interaction leads to BIRC2/3-mediated ubiquitination of TRAF3 upon CD40 engagement in a TRAF2-dependent manner. Interacts with MAP3K14/NIK in response to TNF-alpha stimulation; the interaction leads to NF-kappa B activation. Interacts with PEG3; the interaction may promote TRAF2-mediated NF-kappa B activation. Interacts with HIVEP3; the interaction may inhibit TNF-alpha-TRAF2-mediated NF-kappa B and JNK activation. Interacts with TANK/ITRAF; the interaction prevents interaction between TNFRSF1B/TNFR2 and TRAF2. Interacts with deubiquitinating enzyme CYLD; the interaction results in the deubiquitination and inactivation of TRAF2. Interacts with SIAH2; the interaction leads to TRAF2 ubiquitination and degradation. Interacts with E2 conjugating enzyme UBE2N/Ubc13, E3 ligase ITCH and RNF11 in response to TNF-alpha stimulation. Interacts with ubiquitin-editing enzyme TNFAIP3/A20 in response to TNF-alpha stimulation; the interaction promotes TRAF2 dissociation from UBE2N/Ubc13, ITCH, RNF11 and TAX1BP1 and prevents prolonged TRAF-2 ubiquitination. Interacts with TAX1BP1 in response to TNF-alpha stimulation; the interaction promotes TRAF2 dissociation from UBE2N/Ubc13 and TNFAIP3/A20, and prevents prolonged TRAF-2 ubiquitination. Interacts (via C-terminus) with EIF2AK2/PKR (via the kinase catalytic domain). Interacts with deubiquitinating enzyme USP48. Interacts with PTPN2; probably involved in TNF-mediated signaling. Interacts with Toll-like receptor TLR4/3 adapter TICAM1/TRIF; the interaction may promote TICAM1 ubiquitination. Interacts with kinase/endoribonuclease ERN1/IRE1 and DAB2IP in response to ER stress; the interaction requires DAB2IP. Interacts with ERN1/IRE1 and TAOK3 in response to ER stress; the interaction may promote TRAF2 phosphorylation. Interacts (via zinc fingers) with DAB2IP (via C-terminus PER domain)in response to TNF-alpha stimulation. Interacts with CASP8AP2/FLASH. Interacts with NFATC2IP; the interaction may repress IL-4 production in T cells. Interacts with kinase CDK9. Interacts with sphingosine kinase 1 SPHK1. Interacts with kinase TNIK. Interacts with TRAFD1. Interacts with DNA phosphodiesterase TDP2. Interacts with MAVS/IPS1. Interacts with CARD14. Interacts with Epstein-Barr virus LMP1/BNFL1. Interacts with GPS2. Interacts with XPNPEP3. Interacts with RIPK3. Interacts with RELL2. Interacts with LRRC19. Interacts with GAPDH; promoting TRAF2 ubiquitination. Phosphorylated at several serine residues within the first 128 amino acid residues. Phosphorylated at Thr-117 in response to signaling via TNF and TNFRSF1A. Phosphorylation at Thr-117 is required for 'Lys-63'-linked polyubiquitination, but not for 'Lys-48'-linked polyubiquitination. Phosphorylation at Thr-117 is important for interaction with IKKA and IKKB, activation of IKK and subsequent activation of NF-kappa-B. Post-translationally, undergoes both 'Lys-48'-linked and 'Lys-63'-linked polyubiquitination. Polyubiquitinated via 'Lys-63'-linked ubiquitin in response to TNF signaling; this requires prior phosphorylation at Thr-117. 'Lys-63'-linked polyubiquitination promotes TRAF2-mediated activation of NF-kappa-B. Can be polyubiquitinated at several Lys residues via 'Lys-48'-linked ubiquitin chains in response to TNF signaling, leading to proteasomal degradation. Autoubiquitinated, leading to its subsequent proteasomal degradation. Polyubiquitinated by BIRC2 and SIAH2, leading to its subsequent proteasomal degradation. Deubiquitinated by CYLD, a protease that specifically cleaves 'Lys-63'-linked polyubiquitin chains. Ubiquination is inhibited by LRRC19; inhibits proteasomal degradation. Ubiquitinated at Lys-320 by the SCF(FBXL2) complex, leading to its degradation by the proteasome. Ubiquitinated by E3 ubiquitin-protein ligase complex containing FBXO7; leading to repression of NF-kappa-B signaling.

Its subcellular location is the cytoplasm. The enzyme catalyses S-ubiquitinyl-[E2 ubiquitin-conjugating enzyme]-L-cysteine + [acceptor protein]-L-lysine = [E2 ubiquitin-conjugating enzyme]-L-cysteine + N(6)-ubiquitinyl-[acceptor protein]-L-lysine.. Its pathway is protein modification; protein ubiquitination. With respect to regulation, has very low E3 ubiquitin ligase activity in the absence of sphingosine-1-phosphate. E3 ubiquitin ligase activity is strongly activated by cytoplasmic sphingosine-1-phosphate. Its function is as follows. E3 ubiquitin-protein ligase that regulates activation of NF-kappa-B and JNK and plays a central role in the regulation of cell survival and apoptosis. Catalyzes 'Lys-63'-linked ubiquitination of target proteins, such as BIRC3, IKBKE, MLST8, RIPK1 and TICAM1. Is an essential constituent of several E3 ubiquitin-protein ligase complexes, where it promotes the ubiquitination of target proteins by bringing them into contact with other E3 ubiquitin ligases. Regulates BIRC2 and BIRC3 protein levels by inhibiting their autoubiquitination and subsequent degradation; this does not depend on the TRAF2 RING-type zinc finger domain. Plays a role in mediating activation of NF-kappa-B by EIF2AK2/PKR. In complex with BIRC2 or BIRC3, promotes ubiquitination of IKBKE. Acts as a regulator of mTORC1 and mTORC2 assembly by mediating 'Lys-63'-linked ubiquitination of MLST8, thereby inhibiting formation of the mTORC2 complex, while facilitating assembly of the mTORC1 complex. Required for normal antibody isotype switching from IgM to IgG. In Homo sapiens (Human), this protein is TNF receptor-associated factor 2.